Consider the following 871-residue polypeptide: MGLTPMMRQYMEIKENYKDCILFFRLGDFYEMFFDDAKIAAAELELVLTARECGLKEKAPMCGIPYHAAKSYIGRMVNKGYKIAICEQLEDPAQSKGIVKRGIIKVITPGTYMDSYFLDENENNYIMCLYINNNEGSNCALCFADISTGEFNCTDTPFNLSVILDEICKFNPREIIIQEDIDSNILQGIVEVFNETFSRVDECYFQKGEEVLREQFKDLNLREYTPEIIKCGGALVKYIKHTQKTNLSHINKFQYYNIVDYLTIDINSKRNLEIVESLRESKKKGSLLGVIDKTNTSMGGRQLRKWIEQPLIDRNKIMERLDSVEEILNNICYHEDLKEALKNIYDIERLAGKISSKSVNAKELNSLKSSIEKIPDIKVILSNFETSLLKNMYKNLDELKDIYMLLDKAILDNPSVSLKEGNLIKEGYDSEIDRLKEAKVKGKDWIASLESSERELTKIKSLKIGYNKVFGYYIEVTKSNLNLVPEHRYIRKQTLSNAERYITPELKEMEDKILGAEEKLIYLEYNAFVEVRDKVEKEVTRIQNSARIISEVDCLTSLARAALENNYCKPEITLSDRVYIEEGRHPVVENMLSTGEFVSNDTDIDTGENQLLLITGPNMAGKSTYMRQVALVTIMAQIGSFVPAKSASISICDKIFTRIGASDDLASGKSTFMVEMWEVSNILKNATNKSLILLDEVGRGTSTYDGLSIAWSVIEYICRESKLRCKTLFATHYHELTKLEGKIKGVKNYCVSVKEVENNIVFLRKIIRGGADQSYGIEVAKLAGLPEEVLKRAREILNSLETEKTEESMEGTNLPKKKKEEKTSSQGEQLKFLDIEKENLINEIRDIDILNMTPMEGFNKLYDIIKKVKSI.

ATP is bound at residue 616 to 623; that stretch reads GPNMAGKS. A disordered region spans residues 801-825; the sequence is ETEKTEESMEGTNLPKKKKEEKTSS.

The protein belongs to the DNA mismatch repair MutS family.

Functionally, this protein is involved in the repair of mismatches in DNA. It is possible that it carries out the mismatch recognition step. This protein has a weak ATPase activity. The polypeptide is DNA mismatch repair protein MutS (Clostridium kluyveri (strain NBRC 12016)).